Consider the following 123-residue polypeptide: MPRGSVLLLASLLLAAALSATLGLGSPVKEKRGWTLNSAGYLLGPHALDSHRSFQDKHGLAGKRELEPEDEARPGSFDRPLAENNVVRTIIEFLTFLHLKDAGALERLPSLPTAESAEDAERS.

An N-terminal signal peptide occupies residues 1 to 19 (MPRGSVLLLASLLLAAALS). Positions 20-30 (ATLGLGSPVKE) are excised as a propeptide. A compositionally biased stretch (basic and acidic residues) spans 53–66 (SFQDKHGLAGKREL). The tract at residues 53–79 (SFQDKHGLAGKRELEPEDEARPGSFDR) is disordered. At A61 the chain carries Alanine amide. Phosphoserine is present on S116.

Belongs to the galanin family.

The protein localises to the secreted. Functionally, endocrine hormone of the central and peripheral nervous systems that binds and activates the G protein-coupled receptors GALR1, GALR2, and GALR3. This small neuropeptide may regulate diverse physiologic functions including contraction of smooth muscle of the gastrointestinal and genitourinary tract, growth hormone and insulin release and adrenal secretion. The protein is Galanin peptides (GAL) of Bos taurus (Bovine).